Consider the following 472-residue polypeptide: Phosphoenolpyruvate carboxylase (472 aa).

Belongs to the PEPCase type 2 family. As to quaternary structure, homotetramer. Requires Mg(2+) as cofactor.

It catalyses the reaction oxaloacetate + phosphate = phosphoenolpyruvate + hydrogencarbonate. Functionally, catalyzes the irreversible beta-carboxylation of phosphoenolpyruvate (PEP) to form oxaloacetate (OAA), a four-carbon dicarboxylic acid source for the tricarboxylic acid cycle. The protein is Phosphoenolpyruvate carboxylase of Pyrococcus furiosus (strain ATCC 43587 / DSM 3638 / JCM 8422 / Vc1).